We begin with the raw amino-acid sequence, 507 residues long: RNA-splicing ligase RtcB homolog (507 aa).

Residues Asp121, Cys124, His229, His261, and His355 each coordinate Mn(2+). Asn228–Glu232 is a binding site for GMP. Residues His355–Asn356, Gly404–Met407, Ser411, His430–Gly433, and Lys506 contribute to the GMP site. His430 functions as the GMP-histidine intermediate in the catalytic mechanism.

Belongs to the RtcB family. As to quaternary structure, catalytic component of the tRNA-splicing ligase complex. It depends on Mn(2+) as a cofactor.

The enzyme catalyses a 3'-end 3'-phospho-ribonucleotide-RNA + a 5'-end dephospho-ribonucleoside-RNA + GTP = a ribonucleotidyl-ribonucleotide-RNA + GMP + diphosphate. The catalysed reaction is a 3'-end 2',3'-cyclophospho-ribonucleotide-RNA + a 5'-end dephospho-ribonucleoside-RNA + GTP + H2O = a ribonucleotidyl-ribonucleotide-RNA + GMP + diphosphate + H(+). Its function is as follows. Catalytic subunit of the tRNA-splicing ligase complex that acts by directly joining spliced tRNA halves to mature-sized tRNAs by incorporating the precursor-derived splice junction phosphate into the mature tRNA as a canonical 3',5'-phosphodiester. May act as an RNA ligase with broad substrate specificity, and may function toward other RNAs. In Plasmodium yoelii yoelii, this protein is RNA-splicing ligase RtcB homolog.